We begin with the raw amino-acid sequence, 184 residues long: Oligoribonuclease (184 aa).

The Exonuclease domain maps to 9–172 (LIWIDLEMTG…DDIRESIEEL (164 aa)). Tyrosine 130 is a catalytic residue.

It belongs to the oligoribonuclease family.

The protein resides in the cytoplasm. Its function is as follows. 3'-to-5' exoribonuclease specific for small oligoribonucleotides. In Actinobacillus pleuropneumoniae serotype 5b (strain L20), this protein is Oligoribonuclease.